The primary structure comprises 136 residues: DNA-directed RNA polymerase subunit omega (136 aa).

The protein belongs to the RNA polymerase subunit omega family. The RNAP catalytic core consists of 2 alpha, 1 beta, 1 beta' and 1 omega subunit. When a sigma factor is associated with the core the holoenzyme is formed, which can initiate transcription.

It catalyses the reaction RNA(n) + a ribonucleoside 5'-triphosphate = RNA(n+1) + diphosphate. Promotes RNA polymerase assembly. Latches the N- and C-terminal regions of the beta' subunit thereby facilitating its interaction with the beta and alpha subunits. This Methylorubrum extorquens (strain CM4 / NCIMB 13688) (Methylobacterium extorquens) protein is DNA-directed RNA polymerase subunit omega.